An 878-amino-acid polypeptide reads, in one-letter code: Alanine--tRNA ligase (878 aa).

Positions 562, 566, 670, and 674 each coordinate Zn(2+).

This sequence belongs to the class-II aminoacyl-tRNA synthetase family. Zn(2+) is required as a cofactor.

It is found in the cytoplasm. It carries out the reaction tRNA(Ala) + L-alanine + ATP = L-alanyl-tRNA(Ala) + AMP + diphosphate. Catalyzes the attachment of alanine to tRNA(Ala) in a two-step reaction: alanine is first activated by ATP to form Ala-AMP and then transferred to the acceptor end of tRNA(Ala). Also edits incorrectly charged Ser-tRNA(Ala) and Gly-tRNA(Ala) via its editing domain. This Acinetobacter baumannii (strain ACICU) protein is Alanine--tRNA ligase.